We begin with the raw amino-acid sequence, 214 residues long: Redox-sensing transcriptional repressor Rex (214 aa).

The H-T-H motif DNA-binding region spans 16–55 (IYFRYLNVLKDANKQRVSSTELSEAVQVDSATIRRDFSYF). 90–95 (GVGSLG) is an NAD(+) binding site.

Belongs to the transcriptional regulatory Rex family. As to quaternary structure, homodimer.

The protein resides in the cytoplasm. Functionally, modulates transcription in response to changes in cellular NADH/NAD(+) redox state. This Limosilactobacillus reuteri (strain DSM 20016) (Lactobacillus reuteri) protein is Redox-sensing transcriptional repressor Rex.